A 257-amino-acid polypeptide reads, in one-letter code: uncharacterized protein (257 aa).

N61, N95, N102, N111, N139, N148, and N152 each carry an N-linked (GlcNAc...) asparagine; by host glycan. Residues 233–253 traverse the membrane as a helical segment; that stretch reads WYIIGGIFWVIVLIILVIFII.

It localises to the host membrane. Its subcellular location is the virion. This is an uncharacterized protein from Acanthamoeba polyphaga (Amoeba).